An 878-amino-acid chain; its full sequence is Phosphoenolpyruvate carboxylase (878 aa).

Catalysis depends on residues His-138 and Lys-545.

It belongs to the PEPCase type 1 family. Mg(2+) serves as cofactor.

It carries out the reaction oxaloacetate + phosphate = phosphoenolpyruvate + hydrogencarbonate. In terms of biological role, forms oxaloacetate, a four-carbon dicarboxylic acid source for the tricarboxylic acid cycle. The sequence is that of Phosphoenolpyruvate carboxylase from Shewanella halifaxensis (strain HAW-EB4).